Here is a 159-residue protein sequence, read N- to C-terminus: GDP-mannose mannosyl hydrolase (159 aa).

Substrate-binding positions include 2–3, Phe-8, and Arg-36; that span reads FL. Residues 13 to 153 form the Nudix hydrolase domain; the sequence is RSTPLVSLDF…SRAYFLAEKR (141 aa). Gly-49, Glu-69, and Gln-122 together coordinate Mg(2+). Positions 50–71 match the Nudix box motif; sequence GRVQKDETLEAAFERLTMAELG.

The protein belongs to the Nudix hydrolase family. As to quaternary structure, homodimer. The cofactor is Mg(2+).

The catalysed reaction is GDP-alpha-D-mannose + H2O = D-mannose + GDP + H(+). In terms of biological role, hydrolyzes GDP-mannose. In Escherichia coli O157:H7, this protein is GDP-mannose mannosyl hydrolase.